The chain runs to 562 residues: Sulfite reductase [NADPH] hemoprotein beta-component (562 aa).

[4Fe-4S] cluster-binding residues include Cys426, Cys432, Cys471, and Cys475. Cys475 provides a ligand contact to siroheme.

The protein belongs to the nitrite and sulfite reductase 4Fe-4S domain family. In terms of assembly, alpha(8)-beta(8). The alpha component is a flavoprotein, the beta component is a hemoprotein. It depends on siroheme as a cofactor. [4Fe-4S] cluster serves as cofactor.

The enzyme catalyses hydrogen sulfide + 3 NADP(+) + 3 H2O = sulfite + 3 NADPH + 4 H(+). The protein operates within sulfur metabolism; hydrogen sulfide biosynthesis; hydrogen sulfide from sulfite (NADPH route): step 1/1. Functionally, component of the sulfite reductase complex that catalyzes the 6-electron reduction of sulfite to sulfide. This is one of several activities required for the biosynthesis of L-cysteine from sulfate. The chain is Sulfite reductase [NADPH] hemoprotein beta-component from Shewanella denitrificans (strain OS217 / ATCC BAA-1090 / DSM 15013).